An 88-amino-acid polypeptide reads, in one-letter code: Small ribosomal subunit protein uS17 (88 aa).

It belongs to the universal ribosomal protein uS17 family. As to quaternary structure, part of the 30S ribosomal subunit.

Functionally, one of the primary rRNA binding proteins, it binds specifically to the 5'-end of 16S ribosomal RNA. This is Small ribosomal subunit protein uS17 from Pseudomonas savastanoi pv. phaseolicola (strain 1448A / Race 6) (Pseudomonas syringae pv. phaseolicola (strain 1448A / Race 6)).